Consider the following 251-residue polypeptide: 2-amino-5-chloromuconate deaminase (251 aa).

As to quaternary structure, monomer.

The catalysed reaction is (2Z,4E)-2-aminomuconate + H2O = (2Z,4E)-2-hydroxyhexa-2,4-dienedioate + NH4(+). It functions in the pathway xenobiotic degradation; 4-chloronitrobenzene degradation. It participates in xenobiotic degradation; nitrobenzene degradation. Its activity is regulated as follows. Cysteine residue modifying agents such as p-chloromercuribenzoate and the SH-binding metals Zn(2+), Ni(2+) and Cu(2+) completely inhibit deaminase activity, whereas Ca(2+), Mg(2+) and the histidine residue-modifying agent diethyl pyrocarbonate inhibit the activity by 23 to 50%. Its function is as follows. Involved in the biodegradation of xenobiotic compounds, such as nitrobenzene and 4-chloronitrobenzene (4-CNB). CnbZ preferentially catalyzes the deamination of 2-amino-5-chloromuconate (2A5CM) to yield 2-hydroxy-5-chloromuconate (2H5CM). Also able to catalyze the deamination of 2-aminomuconate to yield 2-hydroxymuconate, which spontaneously converts into its keto form, 2-oxalocrotonate. This chain is 2-amino-5-chloromuconate deaminase, found in Comamonas testosteroni (Pseudomonas testosteroni).